The sequence spans 429 residues: C4-dicarboxylate transport protein (429 aa).

The next 8 helical transmembrane spans lie at 9-29 (VLYVQVIFAIIVGVILGHYYP), 45-65 (LIKMVIGPIIFCTVVTGIAGM), 79-99 (LLYFEIVSTFALLLGLAATHI), 149-169 (GEILQILLIALLFGSVLAHLG), 185-205 (VLFGIVHIVTKLAPIGAFGAM), 223-243 (LIGTFYLTSVVFVLVVLGTIA), 308-328 (IYMTMAVLFIAQATNIELTWM), and 356-376 (AATLAVVPTIPLSGMVLILGI).

Belongs to the dicarboxylate/amino acid:cation symporter (DAACS) (TC 2.A.23) family.

It localises to the cell inner membrane. Its function is as follows. Responsible for the transport of dicarboxylates such as succinate, fumarate, and malate from the periplasm across the membrane. The protein is C4-dicarboxylate transport protein of Burkholderia lata (strain ATCC 17760 / DSM 23089 / LMG 22485 / NCIMB 9086 / R18194 / 383).